Reading from the N-terminus, the 209-residue chain is Homeobox protein ceh-2 (209 aa).

The span at 1–14 (MTLKFSVERLVDSE) shows a compositional bias: basic and acidic residues. Disordered stretches follow at residues 1-46 (MTLK…KSGK) and 181-209 (HKRV…KSVS). The segment covering 15–24 (KESEEADVEE) has biased composition (acidic residues). Residues 126–185 (NKRIRTAFSASQLIQLEKAFEGNHYVVGNERKQLAAKLSLTETQVKVWFQNRRTKHKRVR) constitute a DNA-binding region (homeobox).

Belongs to the EMX homeobox family. In the anterior pharynx, expressed in the I3 interneuron, the NSM and M3 motor neuron pairs, the three m2 muscle cells and the three e2 epithelial cells (at protein level).

It is found in the nucleus. Functionally, required for activity of the M3 pharyngeal motor neuron. This Caenorhabditis elegans protein is Homeobox protein ceh-2.